The chain runs to 312 residues: Cytochrome f (312 aa).

Residues 1–30 (MYLSKNFFLNLKTFIFSFFVLCFFSQSAQA) form the signal peptide. Tyr31, Cys51, Cys54, and His55 together coordinate heme. Residues 278–298 (VQGLLLFSLFILLAQIFLVLK) form a helical membrane-spanning segment.

It belongs to the cytochrome f family. The 4 large subunits of the cytochrome b6-f complex are cytochrome b6, subunit IV (17 kDa polypeptide, petD), cytochrome f and the Rieske protein, while the 4 small subunits are PetG, PetL, PetM and PetN. The complex functions as a dimer. The cofactor is heme.

The protein localises to the plastid. The protein resides in the chloroplast thylakoid membrane. Functionally, component of the cytochrome b6-f complex, which mediates electron transfer between photosystem II (PSII) and photosystem I (PSI), cyclic electron flow around PSI, and state transitions. In Bigelowiella natans (Pedinomonas minutissima), this protein is Cytochrome f (petA).